Reading from the N-terminus, the 236-residue chain is (5-formylfuran-3-yl)methyl phosphate synthase (236 aa).

K27 serves as the catalytic Schiff-base intermediate with substrate. The Proton acceptor role is filled by K85.

The protein belongs to the MfnB family.

It catalyses the reaction 2 D-glyceraldehyde 3-phosphate = 4-(hydroxymethyl)-2-furancarboxaldehyde phosphate + phosphate + 2 H2O. Its pathway is cofactor biosynthesis; methanofuran biosynthesis. Its function is as follows. Catalyzes the formation of 4-(hydroxymethyl)-2-furancarboxaldehyde phosphate (4-HFC-P) from two molecules of glyceraldehyde-3-P (GA-3-P). This is (5-formylfuran-3-yl)methyl phosphate synthase from Methanothermobacter thermautotrophicus (strain ATCC 29096 / DSM 1053 / JCM 10044 / NBRC 100330 / Delta H) (Methanobacterium thermoautotrophicum).